A 328-amino-acid chain; its full sequence is 2,4-dinitroanisole O-demethylase subunit alpha (328 aa).

The propeptide occupies 1-9 (MSVTSQTSS). The Zn(2+) site is built by His-101, His-103, Asp-105, His-168, His-225, and Cys-247.

The protein belongs to the metallo-beta-lactamase superfamily. As to quaternary structure, part of the complex DnhAB composed of the 2,4-dinitroanisole O-demethylase alpha (DnhA) and beta (DnhB) subunits. Zn(2+) is required as a cofactor.

The catalysed reaction is 2,4-dinitroanisole + H2O = 2,4-dinitrophenol + methanol + H(+). Functionally, involved in the degradation of 2,4-dinitroanisole (DNAN), an insensitive munition ingredient used in explosive formulations as a replacement for 2,4,6-trinitrotoluene (TNT). Catalyzes the removal of the methyl group from 2,4-dinitroanisole (DNAN) to yield 2,4-dinitrophenol (2,4-DNP) and methanol. The protein is 2,4-dinitroanisole O-demethylase subunit alpha of Nocardioides sp. (strain JS1661).